A 251-amino-acid polypeptide reads, in one-letter code: Pyruvate formate-lyase-activating enzyme (251 aa).

A Radical SAM core domain is found at 15–244 (VDGPGLRYIL…KEAYRYVNFN (230 aa)). [4Fe-4S] cluster is bound by residues cysteine 29, cysteine 33, and cysteine 36. Residues 35–37 (YCH), glycine 79, 134–136 (DIK), and histidine 207 contribute to the S-adenosyl-L-methionine site.

This sequence belongs to the organic radical-activating enzymes family. [4Fe-4S] cluster is required as a cofactor.

The protein localises to the cytoplasm. It carries out the reaction glycyl-[formate C-acetyltransferase] + reduced [flavodoxin] + S-adenosyl-L-methionine = glycin-2-yl radical-[formate C-acetyltransferase] + semiquinone [flavodoxin] + 5'-deoxyadenosine + L-methionine + H(+). In terms of biological role, activation of pyruvate formate-lyase under anaerobic conditions by generation of an organic free radical, using S-adenosylmethionine and reduced flavodoxin as cosubstrates to produce 5'-deoxy-adenosine. The polypeptide is Pyruvate formate-lyase-activating enzyme (pflA) (Staphylococcus epidermidis (strain ATCC 12228 / FDA PCI 1200)).